The primary structure comprises 275 residues: MSFLKTVPEELTAAAAQLGTIGAAMAAQNAAAAAPTTAIAPAALDEVSALQAALFTAYGTFYQQVSAEAQAMHDMFVNTLGISAGTYGVTESLNSSAAASPLSGITGEASAIIQATTGLFPPELSGGIGNILNIGAGNWASATSTLIGLAGGGLLPAEEAAEAASALGGEAALGELGALGAAEAALGEAGIAAGLGSASAIGMLSVPPAWAGQATLVSTTSTLPGAGWTAAAPQAAAGTFIPGMPGVASAARNSAGFGAPRYGVKPIVMPKPATV.

The PE domain maps to 5–93 (KTVPEELTAA…AGTYGVTESL (89 aa)).

This sequence belongs to the mycobacterial PE family. Forms a heterodimer with PPE15. The dimer forms a 1:1:1 heterotrimeric complex with EspG5.

The protein localises to the secreted. The protein resides in the cell wall. In terms of biological role, promotes the intracellular survival of recombinant Mycobacterium within macrophages by regulating host inflammatory cytokines production and inhibiting cell late apoptosis. The protein is PE family protein PE8 of Mycobacterium tuberculosis (strain ATCC 25618 / H37Rv).